The sequence spans 491 residues: Cholesterol 22-monohydroxylase CYP90B51 (491 aa).

The chain crosses the membrane as a helical span at residues Ile-6–Ile-26. Cys-437 is a binding site for heme.

The protein belongs to the cytochrome P450 family. Mainly expressed in leaves and seed pods and, to a lower extent, in flowers and stems.

It is found in the membrane. The catalysed reaction is cholesterol + reduced [NADPH--hemoprotein reductase] + O2 = (22S)-22-hydroxycholesterol + oxidized [NADPH--hemoprotein reductase] + H2O + H(+). It functions in the pathway steroid metabolism; cholesterol metabolism. Its function is as follows. Canonical brassinosteroid (BR)-biosynthetic enzyme capable of converting cholesterol to 22S-hydroxycholesterol via sterol-C22 hydroxylation. In Trigonella foenum-graecum (Fenugreek), this protein is Cholesterol 22-monohydroxylase CYP90B51.